A 281-amino-acid polypeptide reads, in one-letter code: Ribosomal RNA small subunit methyltransferase A (281 aa).

S-adenosyl-L-methionine is bound by residues N18, L20, G45, E66, D91, and N118.

This sequence belongs to the class I-like SAM-binding methyltransferase superfamily. rRNA adenine N(6)-methyltransferase family. RsmA subfamily.

The protein localises to the cytoplasm. The catalysed reaction is adenosine(1518)/adenosine(1519) in 16S rRNA + 4 S-adenosyl-L-methionine = N(6)-dimethyladenosine(1518)/N(6)-dimethyladenosine(1519) in 16S rRNA + 4 S-adenosyl-L-homocysteine + 4 H(+). Specifically dimethylates two adjacent adenosines (A1518 and A1519) in the loop of a conserved hairpin near the 3'-end of 16S rRNA in the 30S particle. May play a critical role in biogenesis of 30S subunits. The polypeptide is Ribosomal RNA small subunit methyltransferase A (Histophilus somni (strain 129Pt) (Haemophilus somnus)).